The following is a 438-amino-acid chain: 3-phosphoshikimate 1-carboxyvinyltransferase (438 aa).

3-phosphoshikimate contacts are provided by lysine 21, serine 22, and arginine 26. Lysine 21 is a phosphoenolpyruvate binding site. Glycine 93 and arginine 121 together coordinate phosphoenolpyruvate. 3-phosphoshikimate contacts are provided by serine 166, serine 167, glutamine 168, serine 194, aspartate 324, and lysine 351. Glutamine 168 is a binding site for phosphoenolpyruvate. Aspartate 324 serves as the catalytic Proton acceptor. Positions 355 and 395 each coordinate phosphoenolpyruvate.

Belongs to the EPSP synthase family. As to quaternary structure, monomer.

It is found in the cytoplasm. It catalyses the reaction 3-phosphoshikimate + phosphoenolpyruvate = 5-O-(1-carboxyvinyl)-3-phosphoshikimate + phosphate. It functions in the pathway metabolic intermediate biosynthesis; chorismate biosynthesis. Catalyzes the transfer of the enolpyruvyl moiety of phosphoenolpyruvate (PEP) to the 5-hydroxyl of shikimate-3-phosphate (S3P) to produce enolpyruvyl shikimate-3-phosphate and inorganic phosphate. This chain is 3-phosphoshikimate 1-carboxyvinyltransferase, found in Methanobrevibacter smithii (strain ATCC 35061 / DSM 861 / OCM 144 / PS).